The chain runs to 378 residues: MQDVLGNPAGVSSAETWGSWSEKADLGLNIVIVDDQMSARTMLRHVIEDIAPELKVYDFGDPLDALSWCEAGRVDLLLLDYRMPGMDGLEFARRLRRLPSHRDIPIILITIVGDEPIRQAALEAGVIDFLVKPIRPRELRARCSNLLQLRQQSESVKQRALSLEQRLLASMNEVEERERETLSRLARAIEYRDGGTSAFLERMSHVAGLVAEQLGLSEEEVRIIEMAAPLHDMGKIAIPDSVLLKPGKLTEDEMNVMKRHPRIGYELLSGSQNRFIQVGALIALRHHERYDGSGYPDGLVGEAIPLEARIVAVADVFDALLSARPYKEAWTMDAALAYLYAQRGRLFDPRCVDALLRGRAQLEQICGQFSTASARPGV.

The Response regulatory domain occupies 29 to 147 (NIVIVDDQMS…ELRARCSNLL (119 aa)). Aspartate 80 carries the 4-aspartylphosphate modification. Residues 174-371 (VEERERETLS…LEQICGQFST (198 aa)) form the HD-GYP domain.

In terms of assembly, interacts with a subset of GGDEF domain-containing proteins. In terms of processing, phosphorylated and activated by RpfC.

It is found in the cytoplasm. It catalyses the reaction 3',3'-c-di-GMP + 2 H2O = 2 GMP + 2 H(+). Functionally, member of the two-component regulatory system RpfG/RpfC, which is involved in the perception and response to the diffusible signaling factor (DSF), which is essential for cell-cell signaling. Detection of DSF leads to the positive regulation of biofilm dispersal and the production of virulence factors. Activated RpfG degrades cyclic di-GMP to GMP, leading to the activation of Clp, a global transcriptional regulator that regulates a large set of genes in DSF pathway. May also directly control genes involved in biofilm dispersal. The protein is Cyclic di-GMP phosphodiesterase response regulator RpfG (rpfG) of Xanthomonas campestris pv. campestris (strain 8004).